The sequence spans 271 residues: 1,4-dihydroxy-2-naphthoyl-CoA synthase (271 aa).

Residues 71–75 (SGGDQ), Y83, 115–119 (YAIGG), T141, S147, Y244, and K259 contribute to the substrate site. A hydrogencarbonate-binding site is contributed by 140–142 (QTG). Positions 250–263 (KEGRDSFKEKRKPD) are enriched in basic and acidic residues. Residues 250–271 (KEGRDSFKEKRKPDFGQFPRFP) are disordered.

The protein belongs to the enoyl-CoA hydratase/isomerase family. MenB subfamily. Hydrogencarbonate is required as a cofactor.

The catalysed reaction is 2-succinylbenzoyl-CoA + H(+) = 1,4-dihydroxy-2-naphthoyl-CoA + H2O. It functions in the pathway quinol/quinone metabolism; 1,4-dihydroxy-2-naphthoate biosynthesis; 1,4-dihydroxy-2-naphthoate from chorismate: step 6/7. It participates in quinol/quinone metabolism; menaquinone biosynthesis. Its function is as follows. Converts o-succinylbenzoyl-CoA (OSB-CoA) to 1,4-dihydroxy-2-naphthoyl-CoA (DHNA-CoA). This Bacillus subtilis (strain 168) protein is 1,4-dihydroxy-2-naphthoyl-CoA synthase.